A 411-amino-acid chain; its full sequence is Elongation factor 1-gamma (411 aa).

In terms of domain architecture, GST N-terminal spans 3 to 84 (LTLWSGVNPE…HIARLDRSGG (82 aa)). The GST C-terminal domain occupies 90–216 (TPLEGSQVDM…QGATFGAREG (127 aa)). Residues 212–265 (GAREGGAKGQGRGCARPGREEAERAAAAADGAEEEDEAPREKKKPNPLDELPPS) are disordered. Residues 214–223 (REGGAKGQGR) show a composition bias toward gly residues. Positions 255 to 411 (KPNPLDELPP…RPVLEGRVFK (157 aa)) constitute an EF-1-gamma C-terminal domain.

As to quaternary structure, EF-1 is composed of four subunits: alpha, beta, delta, and gamma.

Its function is as follows. Probably plays a role in anchoring the complex to other cellular components. The sequence is that of Elongation factor 1-gamma from Trypanosoma cruzi.